Consider the following 157-residue polypeptide: Lipoprotein signal peptidase (157 aa).

Transmembrane regions (helical) follow at residues 10–30 (LVFIGVFFLIFGVDQAIKHAI), 36–56 (YESLMIDIVLVFNKGVAFSLL), 58–78 (FLEGGLKYLQILLILGLFIFL), and 84–104 (LFKNHAIEFGMVFGAGVSNVL). Active-site residues include aspartate 114 and aspartate 131. Residues 122-142 (FDFAIFNFADVMIDVGVGVLL) traverse the membrane as a helical segment.

This sequence belongs to the peptidase A8 family.

Its subcellular location is the cell inner membrane. It catalyses the reaction Release of signal peptides from bacterial membrane prolipoproteins. Hydrolyzes -Xaa-Yaa-Zaa-|-(S,diacylglyceryl)Cys-, in which Xaa is hydrophobic (preferably Leu), and Yaa (Ala or Ser) and Zaa (Gly or Ala) have small, neutral side chains.. Its pathway is protein modification; lipoprotein biosynthesis (signal peptide cleavage). In terms of biological role, this protein specifically catalyzes the removal of signal peptides from prolipoproteins. This is Lipoprotein signal peptidase from Helicobacter pylori (strain P12).